We begin with the raw amino-acid sequence, 150 residues long: Large ribosomal subunit protein bL9 (150 aa).

This sequence belongs to the bacterial ribosomal protein bL9 family.

Binds to the 23S rRNA. This chain is Large ribosomal subunit protein bL9, found in Baumannia cicadellinicola subsp. Homalodisca coagulata.